Consider the following 650-residue polypeptide: Phosphatidylinositol-3,5-bisphosphate 3-phosphatase MTMR14 (650 aa).

The segment at 1-27 (MAGARAAAAAASAGSSASSGNQPPQEL) is disordered. Lys-194 carries the N6-acetyllysine modification. Residue Asn-226 is glycosylated (N-linked (GlcNAc...) asparagine). Catalysis depends on Cys-330, which acts as the Phosphocysteine intermediate. A 1,2-diacyl-sn-glycero-3-phospho-(1D-myo-inositol-3,5-bisphosphate) contacts are provided by Gly-333, Trp-334, Asp-335, Arg-336, and Arg-382. A 1,2-diacyl-sn-glycero-3-phospho-(1D-myo-inositol-3-phosphate) is bound by residues Gly-333, Trp-334, Asp-335, Arg-336, and Arg-382. A disordered region spans residues 476–546 (AAWRKSHSSS…PRSVDHPLPG (71 aa)). A Phosphoserine modification is found at Ser-518. N-linked (GlcNAc...) asparagine glycosylation occurs at Asn-519. Ser-530, Ser-580, and Ser-624 each carry phosphoserine. Position 638 is an omega-N-methylarginine (Arg-638).

The protein belongs to the protein-tyrosine phosphatase family. Non-receptor class myotubularin subfamily. Expressed in various tissues, including heart, skeletal muscle, placenta, liver, lung, kidney and pancreas.

Its subcellular location is the cytoplasm. It carries out the reaction a 1,2-diacyl-sn-glycero-3-phospho-(1D-myo-inositol-3,5-bisphosphate) + H2O = a 1,2-diacyl-sn-glycero-3-phospho-(1D-myo-inositol-5-phosphate) + phosphate. The enzyme catalyses a 1,2-diacyl-sn-glycero-3-phospho-(1D-myo-inositol-3-phosphate) + H2O = a 1,2-diacyl-sn-glycero-3-phospho-(1D-myo-inositol) + phosphate. Its function is as follows. Lipid phosphatase that specifically dephosphorylates the D-3 position of phosphatidylinositol 3-phosphate and phosphatidylinositol 3,5-bisphosphate, generating phosphatidylinositol and phosphatidylinositol 5-phosphate. In Homo sapiens (Human), this protein is Phosphatidylinositol-3,5-bisphosphate 3-phosphatase MTMR14.